A 208-amino-acid chain; its full sequence is UPF0637 protein BCB4264_A4063 (208 aa).

The protein belongs to the UPF0637 family.

This chain is UPF0637 protein BCB4264_A4063, found in Bacillus cereus (strain B4264).